The sequence spans 174 residues: Probable E3 ubiquitin-protein ligase RHA4A (174 aa).

The segment at Cys105–Arg147 adopts an RING-type; atypical zinc-finger fold. The interval Thr155–Val174 is disordered.

In terms of tissue distribution, expressed in stems, flowers, cauline leaves and roots.

It catalyses the reaction S-ubiquitinyl-[E2 ubiquitin-conjugating enzyme]-L-cysteine + [acceptor protein]-L-lysine = [E2 ubiquitin-conjugating enzyme]-L-cysteine + N(6)-ubiquitinyl-[acceptor protein]-L-lysine.. It participates in protein modification; protein ubiquitination. Functionally, probable E3 ubiquitin-protein ligase that may possess E3 ubiquitin ligase activity in vitro. The polypeptide is Probable E3 ubiquitin-protein ligase RHA4A (Arabidopsis thaliana (Mouse-ear cress)).